Reading from the N-terminus, the 201-residue chain is 3-isopropylmalate dehydratase small subunit (201 aa).

It belongs to the LeuD family. LeuD type 1 subfamily. In terms of assembly, heterodimer of LeuC and LeuD.

The enzyme catalyses (2R,3S)-3-isopropylmalate = (2S)-2-isopropylmalate. It participates in amino-acid biosynthesis; L-leucine biosynthesis; L-leucine from 3-methyl-2-oxobutanoate: step 2/4. Its function is as follows. Catalyzes the isomerization between 2-isopropylmalate and 3-isopropylmalate, via the formation of 2-isopropylmaleate. This Methylorubrum extorquens (strain ATCC 14718 / DSM 1338 / JCM 2805 / NCIMB 9133 / AM1) (Methylobacterium extorquens) protein is 3-isopropylmalate dehydratase small subunit.